The following is a 400-amino-acid chain: Enoyl-[acyl-carrier-protein] reductase [NADH] (400 aa).

Residues 48 to 53, 74 to 75, 111 to 112, and 139 to 140 each bind NAD(+); these read GSSSGY, FE, DA, and LA. Tyr225 contributes to the substrate binding site. Tyr235 acts as the Proton donor in catalysis. NAD(+)-binding positions include Lys244 and 273-275; that span reads VVT.

Belongs to the TER reductase family. In terms of assembly, monomer.

It catalyses the reaction a 2,3-saturated acyl-[ACP] + NAD(+) = a (2E)-enoyl-[ACP] + NADH + H(+). Its pathway is lipid metabolism; fatty acid biosynthesis. In terms of biological role, involved in the final reduction of the elongation cycle of fatty acid synthesis (FAS II). Catalyzes the reduction of a carbon-carbon double bond in an enoyl moiety that is covalently linked to an acyl carrier protein (ACP). The chain is Enoyl-[acyl-carrier-protein] reductase [NADH] from Shewanella frigidimarina (strain NCIMB 400).